The primary structure comprises 99 residues: U8-agatoxin-Ao1a (99 aa).

The signal sequence occupies residues Met-1–Thr-19. The propeptide occupies Ala-20–Arg-45.

This sequence belongs to the neurotoxin 02 (plectoxin) family. Post-translationally, contains 5 disulfide bonds. As to expression, expressed by the venom gland.

Its subcellular location is the secreted. In Agelena orientalis (Funnel-web spider), this protein is U8-agatoxin-Ao1a.